The following is a 77-amino-acid chain: Chaplin-H (77 aa).

The first 25 residues, M1–A25, serve as a signal peptide directing secretion. Positions S36 to N76 constitute a Chaplin domain. 2 forms amyloid fibrils in vitro regions span residues G38–N54 and G57–N72. C56 and C74 are disulfide-bonded.

Belongs to the chaplin family. Short chaplin subfamily. In terms of assembly, homodimer; disulfide linked. About 10% of ChpH isolated from cell wall forms disulfide-bonded homodimers.

The protein resides in the cell surface. It is found in the secreted. Its subcellular location is the cell wall. It localises to the fimbrium. Functionally, one of 8 partially redundant surface-active proteins required for efficient formation of aerial mycelium; the short chaplins assemble into a hydrophobic, amyloidal fibrillar surface layer that envelopes and protects aerial hyphae and spores, presumably anchored to the long chaplins. Chaplins have an overlapping function with the surface-active SapB peptide; chaplins are essential on minimal medium while on rich medium both chaplins and SapB are required for efficient aerial hyphae formation. Chaplins are also involved in cell attachment to a hydrophobic surface. Forms amyloid fibrils in vitro probably composed of stacked beta-sheets. A small chaplin extract (ChpD, ChpE, ChpF, ChpG and ChpH) self-assembles into 2 different amyloids; small fibrils at the air-water interface form an amphipathic membrane that resembles spore-surface structures involved in aerial hyphae formation, and hydrophilic fibrils in solution that resemble the fibers that attach cells to a hydrophobic surface. At the air-water interface the hydrophilic surface is in contact with water (probably equivalent to the peptidoglycan layer), while the hydrophobic face is exposed to the air, making the surface of the aerial hyphae hydrophobic. A minimal chaplin strain capable of forming aerial mycelium/hyphae on minimal medium contains ChpC, ChpE and ChpH. The strain also has restored rodlet formation on the hyphae surface. A small chaplin extract applied to a chaplin-deficient strain restores aerial hyphae formation. The small chaplin extract forms an amyloid-like structure similar to that seen on the surface of cells without rodlets (rdlA-rdlB deletions), and is highly surface active, reducing surface tension from 72 to 26 mJ/m(2), which probably allows escape of hyphae from an aqueous environment into air. The sequence is that of Chaplin-H from Streptomyces coelicolor (strain ATCC BAA-471 / A3(2) / M145).